A 92-amino-acid chain; its full sequence is Small ribosomal subunit protein uS19 (92 aa).

Residues 73 to 92 form a disordered region; that stretch reads EFSPTRSFRGHAGAKNKGKK. Over residues 80 to 92 the composition is skewed to basic residues; the sequence is FRGHAGAKNKGKK.

This sequence belongs to the universal ribosomal protein uS19 family.

Protein S19 forms a complex with S13 that binds strongly to the 16S ribosomal RNA. In Flavobacterium psychrophilum (strain ATCC 49511 / DSM 21280 / CIP 103535 / JIP02/86), this protein is Small ribosomal subunit protein uS19.